Here is a 495-residue protein sequence, read N- to C-terminus: Serine/threonine-protein kinase STN8, chloroplastic (495 aa).

The transit peptide at 1–49 (MASLLSPATPTATSAAFHSCSTAGFSTPTHISSQNSSLSLLSRRGCMMR) directs the protein to the chloroplast. The Protein kinase domain maps to 133-477 (FLVTEKLGEG…AAAALRHPYF (345 aa)). ATP-binding positions include 139–147 (LGEGSFGVV) and K186. The active-site Proton acceptor is D308.

It belongs to the protein kinase superfamily. Ser/Thr protein kinase family.

It localises to the plastid. The protein resides in the chloroplast thylakoid. It carries out the reaction L-seryl-[protein] + ATP = O-phospho-L-seryl-[protein] + ADP + H(+). The enzyme catalyses L-threonyl-[protein] + ATP = O-phospho-L-threonyl-[protein] + ADP + H(+). In terms of biological role, light-dependent serine/threonine protein kinase that specifically phosphorylates N-terminal threonine residues in psbA/D1, psbD/D2, psbC/CP43 and psbH, which are components of the core antenna complex of photosystem II. Phosphorylation of PSII core components facilitates the exchange of chlorophyll proteins between the grana and the stroma lamellae. Also involved in the phosphorylation of the calcium-sensing receptor (CaS). The chain is Serine/threonine-protein kinase STN8, chloroplastic (STN8) from Arabidopsis thaliana (Mouse-ear cress).